Here is a 232-residue protein sequence, read N- to C-terminus: TIR domain-containing adapter molecule 2 (232 aa).

Residues 1 to 10 (MGIGKSKMDP) are compositionally biased toward basic and acidic residues. The interval 1-71 (MGIGKSKMDP…VEERPEEDTE (71 aa)) is disordered. Gly2 is lipidated: N-myristoyl glycine. The segment covering 19–29 (KSQSVDTSQSH) has biased composition (polar residues). A compositionally biased stretch (basic and acidic residues) spans 30-42 (HMSDSKQSEEISL). The span at 55 to 71 (PAEEQEGVEERPEEDTE) shows a compositional bias: acidic residues. The region spanning 70–226 (TEEEVFLKFV…AIWKETRNTV (157 aa)) is the TIR domain. Tyr164 carries the phosphotyrosine modification.

As to quaternary structure, homodimer. Interacts with TLR4, TICAM1, IRF3 and IRF7 in response to LPS. Interacts with IL1R1, IL1RAP, IRAK2, IRAK3 and TRAF6. Interacts with protein kinase-inactive mutants of IRAK1 and IRAK4. Isoform 1 interacts with isoform 2; the interaction occurs in late endosomes and disrupts the interaction between isoform 1 and TICAM1. Interacts with MYD88; the interaction decreases after IL-18 stimulation in a time-dependent manner. Interacts with IL18R1 and IL18RAP. Interacts with TLR2. Interacts with RAB11FIP2. Post-translationally, myristoylated. Required for membrane association which is critical for its ability to initiate efficient signaling. Phosphorylated by PRKCE in response to LPS. Phosphorylation is essential for its function. It is depleted from the membrane upon phosphorylation. Tyrosine phosphorylation is inhibited by phosphatase PTPN4.

It is found in the cytoplasm. Its subcellular location is the golgi apparatus. The protein localises to the cell membrane. The protein resides in the endoplasmic reticulum. It localises to the early endosome. It is found in the late endosome. Its subcellular location is the cell projection. The protein localises to the phagocytic cup. Functions as a sorting adapter in different signaling pathways to facilitate downstream signaling leading to type I interferon induction. In TLR4 signaling, physically bridges TLR4 and TICAM1 and functionally transmits signal to TICAM1 in early endosomes after endocytosis of TLR4. In TLR2 signaling, physically bridges TLR2 and MYD88 and is required for the TLR2-dependent movement of MYD88 to endosomes following ligand engagement. Involved in IL-18 signaling and is proposed to function as a sorting adapter for MYD88 in IL-18 signaling during adaptive immune response. Forms a complex with RAB11FIP2 that is recruited to the phagosomes to promote the activation of the actin-regulatory GTPases RAC1 and CDC42 and subsequent phagocytosis of Gram-negative bacteria. The chain is TIR domain-containing adapter molecule 2 (TICAM2) from Bos taurus (Bovine).